The chain runs to 168 residues: Nascent polypeptide-associated complex subunit alpha (168 aa).

The region spanning S14 to L78 is the NAC-A/B domain. The interval Q83–L129 is disordered. Low complexity predominate over residues A100 to A115. Residues L129 to K168 enclose the UBA domain.

The protein belongs to the NAC-alpha family. In terms of assembly, part of the nascent polypeptide-associated complex (NAC), consisting of EGD2 and EGD1. NAC associates with ribosomes via EGD1.

The protein localises to the cytoplasm. Its subcellular location is the nucleus. Its function is as follows. Component of the nascent polypeptide-associated complex (NAC), a dynamic component of the ribosomal exit tunnel, protecting the emerging polypeptides from interaction with other cytoplasmic proteins to ensure appropriate nascent protein targeting. The NAC complex also promotes mitochondrial protein import by enhancing productive ribosome interactions with the outer mitochondrial membrane and blocks the inappropriate interaction of ribosomes translating non-secretory nascent polypeptides with translocation sites in the membrane of the endoplasmic reticulum. EGD2 may also be involved in transcription regulation. In Eremothecium gossypii (strain ATCC 10895 / CBS 109.51 / FGSC 9923 / NRRL Y-1056) (Yeast), this protein is Nascent polypeptide-associated complex subunit alpha (EGD2).